We begin with the raw amino-acid sequence, 1129 residues long: Egg-laying defective protein 27 (1129 aa).

A compositionally biased stretch (polar residues) spans Met1–Glu11. Residues Met1–Phe43 are disordered. Low complexity predominate over residues Ser22–Ser33. Residues Thr87–His223 enclose the BAH domain. One can recognise an ELM2 domain in the interval Tyr224 to Asp327. One can recognise an SANT domain in the interval Thr332 to Glu384. Residues Pro388–Pro434 are disordered. Residues Leu419–Val429 show a composition bias toward acidic residues. The GATA-type; atypical zinc-finger motif lies at Cys439 to Cys485. 5 disordered regions span residues Lys488–Pro636, Arg693–Asp717, Gln790–Gln814, Met899–Ala950, and Met982–Ala1040. Polar residues-rich tracts occupy residues Pro525–Leu545 and Val561–Glu573. 2 stretches are compositionally biased toward acidic residues: residues Ser613–Pro634 and Lys705–Asp717. Positions Met899–Gln914 are enriched in low complexity. Residues Leu915–His932 show a composition bias toward basic and acidic residues. 2 stretches are compositionally biased toward low complexity: residues Gln933–Ala950 and Ala983–Gln999. Residues Arg1000–Ala1040 show a composition bias toward basic and acidic residues.

In terms of assembly, interacts with ceh-6, sem-4 and sox-2. Interacts with wdr-5.1. In terms of tissue distribution, expression detected in anterior intestine and head region.

Its subcellular location is the nucleus. Functionally, transcription factor which promotes stress survival and delays aging. Required for cell cycle progression and development of the mesodermal and endodermal embryonic lineages. Required for normal T-cell polarity, for correct migration of QL neuroblast descendants and other cells, for embryonic patterning and for the embryonic expression of hlh-8. Also required for the transdifferentiation of the Y rectal epithelial cell to the PDA motor neuron during larval development. The chain is Egg-laying defective protein 27 from Caenorhabditis elegans.